Reading from the N-terminus, the 240-residue chain is tRNA (guanine-N(7)-)-methyltransferase (240 aa).

Positions 71, 96, 123, and 146 each coordinate S-adenosyl-L-methionine. D146 is an active-site residue. Substrate is bound by residues K150, D182, and 219-222; that span reads TKFE.

It belongs to the class I-like SAM-binding methyltransferase superfamily. TrmB family.

It catalyses the reaction guanosine(46) in tRNA + S-adenosyl-L-methionine = N(7)-methylguanosine(46) in tRNA + S-adenosyl-L-homocysteine. The protein operates within tRNA modification; N(7)-methylguanine-tRNA biosynthesis. Catalyzes the formation of N(7)-methylguanine at position 46 (m7G46) in tRNA. This Hydrogenovibrio crunogenus (strain DSM 25203 / XCL-2) (Thiomicrospira crunogena) protein is tRNA (guanine-N(7)-)-methyltransferase.